The primary structure comprises 122 residues: Large ribosomal subunit protein uL14 (122 aa).

It belongs to the universal ribosomal protein uL14 family. In terms of assembly, part of the 50S ribosomal subunit. Forms a cluster with proteins L3 and L19. In the 70S ribosome, L14 and L19 interact and together make contacts with the 16S rRNA in bridges B5 and B8.

Binds to 23S rRNA. Forms part of two intersubunit bridges in the 70S ribosome. The sequence is that of Large ribosomal subunit protein uL14 from Carboxydothermus hydrogenoformans (strain ATCC BAA-161 / DSM 6008 / Z-2901).